The primary structure comprises 307 residues: Metapyrocatechase (307 aa).

VOC domains follow at residues 7-122 (RPGH…LYAD) and 150-269 (RFDH…VFCG). Positions 153, 214, and 265 each coordinate Fe cation.

It belongs to the extradiol ring-cleavage dioxygenase family. As to quaternary structure, homotetramer. The cofactor is Fe(2+).

It carries out the reaction catechol + O2 = (2Z,4E)-2-hydroxy-6-oxohexa-2,4-dienoate + H(+). It functions in the pathway xenobiotic degradation; toluene degradation. This chain is Metapyrocatechase (xylE), found in Pseudomonas putida (Arthrobacter siderocapsulatus).